The sequence spans 745 residues: Cytoskeleton-associated protein 2-like (745 aa).

4 disordered regions span residues 26 to 305 (KGKL…VNRV), 319 to 362 (PATE…LGPQ), 422 to 483 (FPPQ…TYKR), and 608 to 638 (EAVT…PCPS). Composition is skewed to polar residues over residues 67-89 (SKTT…ASQK) and 101-136 (GLTS…SRNP). Residues 183 to 185 (KEN) carry the KEN box motif. The span at 192 to 202 (KPEKPDPELHS) shows a compositional bias: basic and acidic residues. A Glycyl lysine isopeptide (Lys-Gly) (interchain with G-Cter in SUMO1); alternate cross-link involves residue lysine 195. Lysine 195 participates in a covalent cross-link: Glycyl lysine isopeptide (Lys-Gly) (interchain with G-Cter in SUMO2); alternate. Polar residues-rich tracts occupy residues 205–216 (KPNTGSSNQTQK), 224–233 (LSKSSVTQTA), 242–253 (FIRNTQIRTQAV), and 284–301 (NKTQ…QDIT). Positions 427 to 442 (HFLNKTAPRTQASTAA) are enriched in polar residues. The span at 459–475 (KKPEGEDRRKQLEEWQK) shows a compositional bias: basic and acidic residues. Over residues 608 to 624 (EAVTSDTSAAGTNTTSA) the composition is skewed to polar residues. Phosphoserine is present on serine 745.

It belongs to the CKAP2 family. In terms of processing, ubiquitinated by the anaphase promoting complex/cyclosome (APC/C). Highly expressed in regions of active neurogenesis and neural stem/progenitor cells (NSPCs), both embryonic and adult, not detected in lung, liver, kidney, heart, and skeletal muscle.

It localises to the cytoplasm. It is found in the cytoskeleton. Its subcellular location is the spindle pole. In terms of biological role, microtubule-associated protein required for mitotic spindle formation and cell-cycle progression in neural progenitor cells. The protein is Cytoskeleton-associated protein 2-like (Ckap2l) of Mus musculus (Mouse).